The sequence spans 484 residues: Aspartyl/glutamyl-tRNA(Asn/Gln) amidotransferase subunit B (484 aa).

Belongs to the GatB/GatE family. GatB subfamily. In terms of assembly, heterotrimer of A, B and C subunits.

The catalysed reaction is L-glutamyl-tRNA(Gln) + L-glutamine + ATP + H2O = L-glutaminyl-tRNA(Gln) + L-glutamate + ADP + phosphate + H(+). The enzyme catalyses L-aspartyl-tRNA(Asn) + L-glutamine + ATP + H2O = L-asparaginyl-tRNA(Asn) + L-glutamate + ADP + phosphate + 2 H(+). Functionally, allows the formation of correctly charged Asn-tRNA(Asn) or Gln-tRNA(Gln) through the transamidation of misacylated Asp-tRNA(Asn) or Glu-tRNA(Gln) in organisms which lack either or both of asparaginyl-tRNA or glutaminyl-tRNA synthetases. The reaction takes place in the presence of glutamine and ATP through an activated phospho-Asp-tRNA(Asn) or phospho-Glu-tRNA(Gln). The protein is Aspartyl/glutamyl-tRNA(Asn/Gln) amidotransferase subunit B of Anaeromyxobacter dehalogenans (strain 2CP-1 / ATCC BAA-258).